A 795-amino-acid polypeptide reads, in one-letter code: MEGLTLSDAEQKYYSDLFSYCDIESTKKVVVNGRVLELFRAAQLPNDVVLQIMELCGATRLGYFGRSQFYIALKLVAVAQSGFPLRVESINTVKDLPLPRFVASKNEQESRLAASYSSDSENQGSYSGVIPPPPGRGQVKKGPGSHDAVQPRPSAEQQEPVSPVVSPQQSPPTSPHTWRKHSRHPSGGNSERPLTGPGPFWSPFGDAQAGSSAGDAVWSGQSPPPPQDNWVSFADTPPTSALLTMHPASVQDQTTVRTVASAATANEIRRQSSSYEDPWKITDEQRQYYVNQFKTIQPDLNGFIPGSAAKEFFTKSKLPILELSHIWELSDFDKDGALTLDEFCAAFHLVVARKNGYDLPEKLPESLMPKLIDLEDSADVGEQPGEVGYSGSPAEAPPSKSPSMPSLNQTWPELNQSSEQWETFSERSSSSQTLTQFDSNIAPADPDTAIVHPVPIRMTPSKIHMQEMELKRTSSDHTNPTSPLLVKPSDLSEENKINSSVKFPSGNTVDGYSSSDSFPSDPEQIGSSVTRQRSHSGTSPDNTAPPPPPPRPQPSHSRSSSLDMNRTFAVTTGQQQAGVVAHPPAVPPRPQPSQAPGPSVHRPVDADGLITHTSTSPQQIPEQPNFADFSQFEVFAASNVSEEQDSEAEKHPEVLPAEKASDPSSSLRAAQADSKAEEKTATNVPANVSKGTTPLAPPPKPVRRRLKSEDELRPDVDEHTQKTGVLAAVLTSQPSIPRSVGKDKKAIQASIRRNKETNTVLARLNSELQQQLKDVLEERISLEVQLEQLRPFSHL.

The region spanning 10–113 is the EH 1 domain; the sequence is EQKYYSDLFS…SKNEQESRLA (104 aa). The interval 112-238 is disordered; the sequence is LAASYSSDSE…NWVSFADTPP (127 aa). Residues 115–126 are compositionally biased toward polar residues; it reads SYSSDSENQGSY. Residues Ser145, Ser162, Ser166, and Ser170 each carry the phosphoserine modification. The span at 156–168 shows a compositional bias: low complexity; the sequence is EQQEPVSPVVSPQ. The residue at position 173 (Thr173) is a Phosphothreonine. Over residues 205–216 the composition is skewed to low complexity; it reads GDAQAGSSAGDA. A phosphoserine mark is found at Ser272 and Ser273. The region spanning 285-374 is the EH 2 domain; the sequence is QRQYYVNQFK…ESLMPKLIDL (90 aa). Tyr288 bears the Phosphotyrosine mark. Phosphoserine is present on Ser307. An EF-hand domain is found at 318-353; it reads LPILELSHIWELSDFDKDGALTLDEFCAAFHLVVAR. Residues Asp331, Asp333, Asp335, and Glu342 each coordinate Ca(2+). Disordered stretches follow at residues 380-433 and 469-720; these read VGEQ…SSQT and ELKR…DEHT. The segment covering 407–433 has biased composition (polar residues); it reads LNQTWPELNQSSEQWETFSERSSSSQT. Residues Ser475, Ser482, and Ser489 each carry the phosphoserine modification. Polar residues-rich tracts occupy residues 497 to 518 and 525 to 542; these read INSSVKFPSGNTVDGYSSSDSF and IGSSVTRQRSHSGTSPDN. Ser539 is subject to Phosphoserine. The residue at position 543 (Thr543) is a Phosphothreonine. Over residues 543–553 the composition is skewed to pro residues; it reads TAPPPPPPRPQ. A Phosphoserine modification is found at Ser561. Over residues 562–573 the composition is skewed to polar residues; it reads LDMNRTFAVTTG. A compositionally biased stretch (low complexity) spans 574 to 583; the sequence is QQQAGVVAHP. A compositionally biased stretch (pro residues) spans 584-595; that stretch reads PAVPPRPQPSQA. Composition is skewed to polar residues over residues 611–622 and 681–692; these read THTSTSPQQIPE and ATNVPANVSKGT. The segment at 651–795 is interaction with RALBP1; that stretch reads HPEVLPAEKA…LEQLRPFSHL (145 aa). Residues 707 to 720 are compositionally biased toward basic and acidic residues; that stretch reads KSEDELRPDVDEHT. Phosphoserine occurs at positions 708 and 739. Residues 750–790 are a coiled coil; that stretch reads SIRRNKETNTVLARLNSELQQQLKDVLEERISLEVQLEQLR.

In terms of assembly, homodimer (Potential). Interacts with RALBP1, CRK and GRB2. Binding to RALBP1 does not affect its Ral-binding activity. Forms a complex with the SH3 domains of CRK and GRB2 which may link it to an EGF-responsive tyrosine kinase. Interacts with RAB11FIP2. Interacts with AMPH, ITSN1 (via SH3 domains) and SGIP1; may be involved in clathrin-mediated endocytosis. EGF stimulates phosphorylation on Tyr-residues. Expressed in all tissues examined. The highest level expression was found in the kidney and testis.

It is found in the membrane. The protein localises to the clathrin-coated pit. Its function is as follows. May coordinate the cellular actions of activated EGF receptors and Ral-GTPases. The sequence is that of RalBP1-associated Eps domain-containing protein 1 (Reps1) from Mus musculus (Mouse).